Here is a 257-residue protein sequence, read N- to C-terminus: 24 kDa outer membrane protein (257 aa).

A signal peptide spans 1-21 (MKNKSKLLACCLMALPISSFS).

It belongs to the MipA/OmpV family.

It is found in the cell outer membrane. The chain is 24 kDa outer membrane protein from Pasteurella multocida (strain Pm70).